The primary structure comprises 98 residues: Small ribosomal subunit protein uS19 (98 aa).

The tract at residues 74–98 (FAPTRNYRGHAGGKSEKGGSAPRKK) is disordered.

This sequence belongs to the universal ribosomal protein uS19 family.

In terms of biological role, protein S19 forms a complex with S13 that binds strongly to the 16S ribosomal RNA. The protein is Small ribosomal subunit protein uS19 of Chlorobium chlorochromatii (strain CaD3).